Reading from the N-terminus, the 347-residue chain is UDP-rhamnose/UDP-galactose transporter 1 (347 aa).

The next 10 membrane-spanning stretches (helical) occupy residues 11 to 31 (AVSD…IIMA), 43 to 63 (FGFA…VGMV), 80 to 100 (LLWF…SLML), 103 to 123 (VGFY…LEWI), 132 to 152 (EVKA…VTDV), 159 to 179 (FICA…IGSL), 195 to 215 (APIQ…LLSG), 223 to 243 (MTYG…FCNI), 256 to 276 (SFQV…WLLF), and 285 to 305 (IAGM…VDIE).

The protein belongs to the TPT transporter family. TPT (TC 2.A.7.9) subfamily. In terms of tissue distribution, widely expressed in the whole plant.

It localises to the golgi apparatus membrane. Its function is as follows. Nucleotide-sugar transporter that transports UDP-rhamnose or UDP-galactose and UMP in a strict counter-exchange mode. The sequence is that of UDP-rhamnose/UDP-galactose transporter 1 from Arabidopsis thaliana (Mouse-ear cress).